We begin with the raw amino-acid sequence, 160 residues long: SsrA-binding protein (160 aa).

Belongs to the SmpB family.

It is found in the cytoplasm. Its function is as follows. Required for rescue of stalled ribosomes mediated by trans-translation. Binds to transfer-messenger RNA (tmRNA), required for stable association of tmRNA with ribosomes. tmRNA and SmpB together mimic tRNA shape, replacing the anticodon stem-loop with SmpB. tmRNA is encoded by the ssrA gene; the 2 termini fold to resemble tRNA(Ala) and it encodes a 'tag peptide', a short internal open reading frame. During trans-translation Ala-aminoacylated tmRNA acts like a tRNA, entering the A-site of stalled ribosomes, displacing the stalled mRNA. The ribosome then switches to translate the ORF on the tmRNA; the nascent peptide is terminated with the 'tag peptide' encoded by the tmRNA and targeted for degradation. The ribosome is freed to recommence translation, which seems to be the essential function of trans-translation. This is SsrA-binding protein from Shewanella amazonensis (strain ATCC BAA-1098 / SB2B).